The primary structure comprises 187 residues: Large ribosomal subunit protein uL13 (187 aa).

The protein belongs to the universal ribosomal protein uL13 family. Part of the 50S ribosomal subunit.

Its function is as follows. This protein is one of the early assembly proteins of the 50S ribosomal subunit, although it is not seen to bind rRNA by itself. It is important during the early stages of 50S assembly. This chain is Large ribosomal subunit protein uL13, found in Pyrobaculum aerophilum (strain ATCC 51768 / DSM 7523 / JCM 9630 / CIP 104966 / NBRC 100827 / IM2).